We begin with the raw amino-acid sequence, 77 residues long: Tachyplesin-2 (77 aa).

Positions 1 to 23 are cleaved as a signal peptide; sequence MKKLVIALCLMMVLAVMVEEAEA. 2 disulfide bridges follow: cysteine 26/cysteine 39 and cysteine 30/cysteine 35. Residue arginine 40 is modified to Arginine amide. Residues 41-77 constitute a propeptide that is removed on maturation; the sequence is GKRNEVRQYRDRGYDVRAIPDETFFTRQDEDEDDDEE.

This sequence belongs to the tachyplesin/polyphemusin family. Hemocytes.

Its subcellular location is the secreted. Significantly inhibits the growth of Gram-negative and Gram-positive bacteria. The sequence is that of Tachyplesin-2 from Tachypleus tridentatus (Japanese horseshoe crab).